Consider the following 201-residue polypeptide: Small ribosomal subunit protein uS4c (201 aa).

Residues 16-43 are disordered; the sequence is GALPGLTSKKPRSASDLRNQSRSGKRSQ. The region spanning 89–169 is the S4 RNA-binding domain; it reads MRLDNILFRL…LPKHLTLHSF (81 aa).

Belongs to the universal ribosomal protein uS4 family. Part of the 30S ribosomal subunit. Contacts protein S5. The interaction surface between S4 and S5 is involved in control of translational fidelity.

Its subcellular location is the plastid. It localises to the chloroplast. Its function is as follows. One of the primary rRNA binding proteins, it binds directly to 16S rRNA where it nucleates assembly of the body of the 30S subunit. In terms of biological role, with S5 and S12 plays an important role in translational accuracy. The chain is Small ribosomal subunit protein uS4c (rps4) from Nymphaea alba (White water-lily).